Here is a 210-residue protein sequence, read N- to C-terminus: Large ribosomal subunit protein uL3 (210 aa).

The protein belongs to the universal ribosomal protein uL3 family. As to quaternary structure, part of the 50S ribosomal subunit. Forms a cluster with proteins L14 and L19.

Its function is as follows. One of the primary rRNA binding proteins, it binds directly near the 3'-end of the 23S rRNA, where it nucleates assembly of the 50S subunit. The polypeptide is Large ribosomal subunit protein uL3 (Natranaerobius thermophilus (strain ATCC BAA-1301 / DSM 18059 / JW/NM-WN-LF)).